The sequence spans 104 residues: Large ribosomal subunit protein eL30 (104 aa).

It belongs to the eukaryotic ribosomal protein eL30 family.

The protein is Large ribosomal subunit protein eL30 (RPL30) of Tetrahymena thermophila (strain SB210).